The chain runs to 191 residues: Protein GrpE (191 aa).

This sequence belongs to the GrpE family. Homodimer.

Its subcellular location is the cytoplasm. Its function is as follows. Participates actively in the response to hyperosmotic and heat shock by preventing the aggregation of stress-denatured proteins, in association with DnaK and GrpE. It is the nucleotide exchange factor for DnaK and may function as a thermosensor. Unfolded proteins bind initially to DnaJ; upon interaction with the DnaJ-bound protein, DnaK hydrolyzes its bound ATP, resulting in the formation of a stable complex. GrpE releases ADP from DnaK; ATP binding to DnaK triggers the release of the substrate protein, thus completing the reaction cycle. Several rounds of ATP-dependent interactions between DnaJ, DnaK and GrpE are required for fully efficient folding. The polypeptide is Protein GrpE (Listeria monocytogenes serotype 4a (strain HCC23)).